A 101-amino-acid polypeptide reads, in one-letter code: Small ribosomal subunit protein uS14 (101 aa).

A disordered region spans residues 1–20 (MAKTSAVNRNKMRERMASRD). The span at 11–20 (KMRERMASRD) shows a compositional bias: basic and acidic residues.

This sequence belongs to the universal ribosomal protein uS14 family. Part of the 30S ribosomal subunit. Contacts proteins S3 and S10.

Binds 16S rRNA, required for the assembly of 30S particles and may also be responsible for determining the conformation of the 16S rRNA at the A site. The polypeptide is Small ribosomal subunit protein uS14 (Granulibacter bethesdensis (strain ATCC BAA-1260 / CGDNIH1)).